Consider the following 386-residue polypeptide: Decapping nuclease RAI1 (386 aa).

Residue Arg34 coordinates substrate. Glu159 serves as a coordination point for a divalent metal cation. Glu205 serves as a coordination point for substrate. A divalent metal cation-binding residues include Asp207, Glu225, and Leu226. Positions 227 and 251 each coordinate substrate.

This sequence belongs to the DXO/Dom3Z family. Interacts with RAT1; the interaction is direct, stabilizes RAT1 protein structure and stimulates its exoribonuclease activity. The interaction also stimulates RAI1 pyrophosphohydrolase activity, probably by recruiting it to mRNA substrates. The cofactor is a divalent metal cation.

The protein localises to the nucleus. It catalyses the reaction a 5'-end NAD(+)-phospho-ribonucleoside in mRNA + H2O = a 5'-end phospho-ribonucleoside in mRNA + NAD(+) + H(+). The enzyme catalyses a 5'-end (N(7)-methyl 5'-triphosphoguanosine)-ribonucleoside-ribonucleotide in mRNA + H2O = a (N(7)-methyl 5'-triphosphoguanosine)-nucleoside + a 5'-end phospho-ribonucleoside in mRNA + H(+). The catalysed reaction is a 5'-end triphospho-ribonucleoside in mRNA + H2O = a 5'-end phospho-ribonucleoside in mRNA + diphosphate + H(+). Functionally, decapping enzyme for NAD-capped RNAs: specifically hydrolyzes the nicotinamide adenine dinucleotide (NAD) cap from a subset of RNAs by removing the entire NAD moiety from the 5'-end of an NAD-capped RNA. The NAD-cap is present at the 5'-end of some RNAs and snoRNAs. In contrast to the canonical 5'-end N7 methylguanosine (m7G) cap, the NAD cap promotes mRNA decay. Also acts as a non-canonical decapping enzyme that removes the entire cap structure of m7G capped or incompletely capped RNAs. Has decapping activity toward incomplete 5'-end m7G cap mRNAs such as unmethylated 5'-end-capped RNA (cap0), while it has no activity toward 2'-O-ribose methylated m7G cap (cap1). Also possesses RNA 5'-pyrophosphohydrolase activity by hydrolyzing the 5'-end triphosphate to release pyrophosphates. Stimulates exoribonuclease activity of Rat1, allowing it to degrade RNAs with stable secondary structure more effectively. In Cryptococcus neoformans var. neoformans serotype D (strain B-3501A) (Filobasidiella neoformans), this protein is Decapping nuclease RAI1 (RAI1).